Here is a 159-residue protein sequence, read N- to C-terminus: Protein NrdI (159 aa).

Belongs to the NrdI family.

Its function is as follows. Probably involved in ribonucleotide reductase function. The sequence is that of Protein NrdI from Rhodococcus erythropolis (strain PR4 / NBRC 100887).